A 67-amino-acid chain; its full sequence is Small ribosomal subunit protein bS21 (67 aa).

It belongs to the bacterial ribosomal protein bS21 family.

In Hydrogenobaculum sp. (strain Y04AAS1), this protein is Small ribosomal subunit protein bS21.